Here is a 413-residue protein sequence, read N- to C-terminus: Chloramphenicol efflux pump Rv0191 (413 aa).

12 consecutive transmembrane segments (helical) span residues L23–A43, V55–P75, L89–F109, A110–I130, I150–L170, L176–L196, V226–I246, N256–A276, A286–F306, A312–V332, G353–L373, and L378–V398.

The protein belongs to the major facilitator superfamily.

The protein resides in the cell membrane. With respect to regulation, inhibited by the drug efflux pump inhibitors verapamil, resperine, piperine, chlorpromazine and carbonyl cyanide m-chlorophenylhydrazone (CCCP). Active efflux pump that plays an important role in chloramphenicol resistance. Overexpression causes pyrazinamide resistance. The protein is Chloramphenicol efflux pump Rv0191 of Mycobacterium tuberculosis (strain ATCC 25618 / H37Rv).